Consider the following 177-residue polypeptide: NAD(P)H-quinone oxidoreductase subunit 6, chloroplastic (177 aa).

The next 5 helical transmembrane spans lie at 10-30, 32-52, 61-81, 92-112, and 152-172; these read IFLV…VLLT, PVYS…FHIP, AQLL…VMFM, LWTV…FSLI, and FYLP…GAIA.

Belongs to the complex I subunit 6 family. NDH is composed of at least 16 different subunits, 5 of which are encoded in the nucleus.

The protein resides in the plastid. Its subcellular location is the chloroplast thylakoid membrane. It carries out the reaction a plastoquinone + NADH + (n+1) H(+)(in) = a plastoquinol + NAD(+) + n H(+)(out). The enzyme catalyses a plastoquinone + NADPH + (n+1) H(+)(in) = a plastoquinol + NADP(+) + n H(+)(out). Its function is as follows. NDH shuttles electrons from NAD(P)H:plastoquinone, via FMN and iron-sulfur (Fe-S) centers, to quinones in the photosynthetic chain and possibly in a chloroplast respiratory chain. The immediate electron acceptor for the enzyme in this species is believed to be plastoquinone. Couples the redox reaction to proton translocation, and thus conserves the redox energy in a proton gradient. This is NAD(P)H-quinone oxidoreductase subunit 6, chloroplastic (ndhG) from Illicium oligandrum (Star anise).